The sequence spans 198 residues: Recombination protein RecR (198 aa).

A C4-type zinc finger spans residues 56 to 71 (CGVCGNVDTSNPCGIC). The Toprim domain maps to 79–174 (RSICVVEEVA…RVTQLAHGLP (96 aa)).

This sequence belongs to the RecR family.

May play a role in DNA repair. It seems to be involved in an RecBC-independent recombinational process of DNA repair. It may act with RecF and RecO. This is Recombination protein RecR from Novosphingobium aromaticivorans (strain ATCC 700278 / DSM 12444 / CCUG 56034 / CIP 105152 / NBRC 16084 / F199).